Reading from the N-terminus, the 361-residue chain is 45 kDa calcium-binding protein (361 aa).

The signal sequence occupies residues 1–35 (MVWLVAMTSRQRSLCGLAAHGLWFLGLVLLMDATA). N-linked (GlcNAc...) asparagine glycosylation is present at N39. 2 EF-hand domains span residues 97-132 (RSRR…KTAE) and 136-171 (EAVK…SKGH). S98 bears the Phosphoserine mark. Ca(2+)-binding residues include D110, N112, D114, R116, E121, D149, D151, D153, H155, and E160. T192 is subject to Phosphothreonine. EF-hand domains follow at residues 196–231 (LGNL…HSRG), 232–267 (MLKF…TVEN), 277–312 (WVKD…MNEY), and 313–348 (NALN…FTGS). D212 is a binding site for Ca(2+). The residue at position 216 (T216) is a Phosphothreonine. Ca(2+) contacts are provided by E219, D245, D247, D249, Q251, and E256. Residue T264 is modified to Phosphothreonine. Residues D290, N292, and D294 each contribute to the Ca(2+) site. T298 bears the Phosphothreonine mark. Residues E301, D326, N328, N330, H332, and E337 each coordinate Ca(2+). The interval 308–361 (PMNEYNALNEAKQMIAIADENQNHHLEPEEILKYSEFFTGSKLMDYARNVHEEF) is necessary for intracellular retention in Golgi apparatus lumen.

The protein belongs to the CREC family. In terms of assembly, a membrane-associated isoform interacts with STX3 and STXBP1. A membrane-associated isoform is expressed in acini of the pancreas (at protein level). Ubiquitous.

Its subcellular location is the golgi apparatus lumen. Its function is as follows. A membrane-associated isoform may be involved in the exocytosis of zymogens by pancreatic acini. May regulate calcium-dependent activities in the endoplasmic reticulum lumen or post-ER compartment. The chain is 45 kDa calcium-binding protein (Sdf4) from Rattus norvegicus (Rat).